Here is a 762-residue protein sequence, read N- to C-terminus: N,N-dimethylformamidase beta subunit (762 aa).

Heterotetramer of two DmfA1 (alpha) and two DmfA2 (beta) subunits.

The enzyme catalyses N,N-dimethylformamide + H2O = dimethylamine + formate. In terms of biological role, hydrolyzes N,N-dimethylformamide, and to a lesser extent N,N-dimethylacetamide and N,N-diethylacetamide. Has no activity against the substituted amides N-methylformamide, N-ethylformamide, N-ethylformamide and N-methylacetamide or the unsubstituted amides formamide, nicotinamide, acetoamide, benzamide, acetamide and acrylamide. The sequence is that of N,N-dimethylformamidase beta subunit from Paracoccus aminophilus.